A 365-amino-acid polypeptide reads, in one-letter code: Fructose-1,6-bisphosphatase class 1 2 (365 aa).

4 residues coordinate Mg(2+): Glu-100, Asp-122, Leu-124, and Asp-125. Residues 125 to 128 (DGSS) and Asn-221 contribute to the substrate site. Glu-293 contributes to the Mg(2+) binding site.

This sequence belongs to the FBPase class 1 family. As to quaternary structure, homotetramer. Requires Mg(2+) as cofactor.

The protein localises to the cytoplasm. It catalyses the reaction beta-D-fructose 1,6-bisphosphate + H2O = beta-D-fructose 6-phosphate + phosphate. It participates in carbohydrate biosynthesis; gluconeogenesis. The protein is Fructose-1,6-bisphosphatase class 1 2 of Leptothrix cholodnii (strain ATCC 51168 / LMG 8142 / SP-6) (Leptothrix discophora (strain SP-6)).